Consider the following 196-residue polypeptide: Thymidine kinase (196 aa).

Residues 9 to 16 and 85 to 88 contribute to the ATP site; these read GTMNSGKS and DEAQ. E86 functions as the Proton acceptor in the catalytic mechanism. Zn(2+) is bound by residues C143, C146, C180, and H183.

Belongs to the thymidine kinase family. In terms of assembly, homotetramer.

It localises to the cytoplasm. It catalyses the reaction thymidine + ATP = dTMP + ADP + H(+). The protein is Thymidine kinase of Streptococcus thermophilus (strain CNRZ 1066).